Consider the following 201-residue polypeptide: Probable nicotinate-nucleotide adenylyltransferase (201 aa).

The protein belongs to the NadD family.

The catalysed reaction is nicotinate beta-D-ribonucleotide + ATP + H(+) = deamido-NAD(+) + diphosphate. It participates in cofactor biosynthesis; NAD(+) biosynthesis; deamido-NAD(+) from nicotinate D-ribonucleotide: step 1/1. Functionally, catalyzes the reversible adenylation of nicotinate mononucleotide (NaMN) to nicotinic acid adenine dinucleotide (NaAD). The sequence is that of Probable nicotinate-nucleotide adenylyltransferase from Clostridium botulinum (strain Loch Maree / Type A3).